The chain runs to 367 residues: UDP-N-acetylenolpyruvoylglucosamine reductase (367 aa).

One can recognise an FAD-binding PCMH-type domain in the interval 29 to 205; the sequence is VGPVAQRVIT…LEVEFKLDAS (177 aa). The active site involves Arg-177. The active-site Proton donor is the Ser-260. Glu-359 is a catalytic residue.

This sequence belongs to the MurB family. The cofactor is FAD.

The protein localises to the cytoplasm. It carries out the reaction UDP-N-acetyl-alpha-D-muramate + NADP(+) = UDP-N-acetyl-3-O-(1-carboxyvinyl)-alpha-D-glucosamine + NADPH + H(+). It functions in the pathway cell wall biogenesis; peptidoglycan biosynthesis. In terms of biological role, cell wall formation. In Mycobacterium leprae (strain Br4923), this protein is UDP-N-acetylenolpyruvoylglucosamine reductase.